The primary structure comprises 481 residues: Chromosomal replication initiator protein DnaA (481 aa).

The domain I, interacts with DnaA modulators stretch occupies residues 1-71; the sequence is MTDLSAFWPQ…ETFAEDILGR (71 aa). Residues 71–143 are domain II; the sequence is RPVTIELRIG…PAIGGGHEST (73 aa). The segment covering 86 to 96 has biased composition (low complexity); that stretch reads ASAPAAASPRS. The tract at residues 86-110 is disordered; sequence ASAPAAASPRSPGRPAPAPVAATPT. The domain III, AAA+ region stretch occupies residues 144-361; sequence RLNPAFTFES…GALKRVVAYS (218 aa). ATP is bound by residues Gly-189, Gly-191, Lys-192, and Thr-193. Residues 362-481 form a domain IV, binds dsDNA region; sequence RFSNQPISLD…YAALQQMLRN (120 aa).

Belongs to the DnaA family. In terms of assembly, oligomerizes as a right-handed, spiral filament on DNA at oriC.

It is found in the cytoplasm. In terms of biological role, plays an essential role in the initiation and regulation of chromosomal replication. ATP-DnaA binds to the origin of replication (oriC) to initiate formation of the DNA replication initiation complex once per cell cycle. Binds the DnaA box (a 9 base pair repeat at the origin) and separates the double-stranded (ds)DNA. Forms a right-handed helical filament on oriC DNA; dsDNA binds to the exterior of the filament while single-stranded (ss)DNA is stabiized in the filament's interior. The ATP-DnaA-oriC complex binds and stabilizes one strand of the AT-rich DNA unwinding element (DUE), permitting loading of DNA polymerase. After initiation quickly degrades to an ADP-DnaA complex that is not apt for DNA replication. Binds acidic phospholipids. The protein is Chromosomal replication initiator protein DnaA of Laribacter hongkongensis (strain HLHK9).